The primary structure comprises 250 residues: Proteasome subunit alpha type-4-2 (250 aa).

The 26S proteasome consists of a 20S proteasome core and two 19S regulatory subunits. The 20S proteasome core is composed of 28 subunits that are arranged in four stacked rings, resulting in a barrel-shaped structure. The two end rings are each formed by seven alpha subunits, and the two central rings are each formed by seven beta subunits. The catalytic chamber with the active sites is on the inside of the barrel.

The protein resides in the cytoplasm. The protein localises to the nucleus. In terms of biological role, the proteasome is a multicatalytic proteinase complex which is characterized by its ability to cleave peptides with Arg, Phe, Tyr, Leu, and Glu adjacent to the leaving group at neutral or slightly basic pH. The proteasome has an ATP-dependent proteolytic activity. In Oryza sativa subsp. indica (Rice), this protein is Proteasome subunit alpha type-4-2.